Reading from the N-terminus, the 420-residue chain is Protein BDLF2 (420 aa).

Disordered regions lie at residues 1–21 (MVDEQVAVEHGTVSHTISREE) and 64–129 (AAAV…GGQR). Residues 1–184 (MVDEQVAVEH…AETLAEPPRC (184 aa)) are Intravirion-facing. The span at 90 to 108 (TKTNTQDQNQNQTTRTRTN) shows a compositional bias: low complexity. The helical; Signal-anchor for type II membrane protein transmembrane segment at 185 to 205 (FMLSFVFIYYCCYLAFLALLA) threads the bilayer. Residues 206 to 420 (FGFNPLFLPS…LEEVMYVMVQ (215 aa)) are Virion surface-facing. N-linked (GlcNAc...) asparagine; by host glycosylation is found at N258, N264, N300, N304, N371, and N384.

Belongs to the herpesviridae BDLF2 family. In terms of assembly, interacts with BMRF2.

It localises to the virion membrane. Rearranges cellular actin to increase intercellular contacts and thereby promote virus cell-to-cell spreading. Induce the outgrowth of long, branched plasma membrane fronds to create intercellular network for virion traffic. The fronds are actin based and RhoA-dependent. This chain is Protein BDLF2, found in Homo sapiens (Human).